Consider the following 273-residue polypeptide: NH(3)-dependent NAD(+) synthetase (273 aa).

46–53 (GISGGQDS) contacts ATP. Aspartate 52 serves as a coordination point for Mg(2+). Arginine 139 provides a ligand contact to deamido-NAD(+). Residue threonine 159 coordinates ATP. Glutamate 164 provides a ligand contact to Mg(2+). Residues lysine 172 and aspartate 179 each contribute to the deamido-NAD(+) site. Lysine 188 and threonine 210 together coordinate ATP. Residue 259–260 (HK) participates in deamido-NAD(+) binding.

Belongs to the NAD synthetase family. In terms of assembly, homodimer.

It catalyses the reaction deamido-NAD(+) + NH4(+) + ATP = AMP + diphosphate + NAD(+) + H(+). It functions in the pathway cofactor biosynthesis; NAD(+) biosynthesis; NAD(+) from deamido-NAD(+) (ammonia route): step 1/1. Its function is as follows. Catalyzes the ATP-dependent amidation of deamido-NAD to form NAD. Uses ammonia as a nitrogen source. In Streptococcus agalactiae serotype Ia (strain ATCC 27591 / A909 / CDC SS700), this protein is NH(3)-dependent NAD(+) synthetase.